The primary structure comprises 564 residues: Urocanate hydratase (564 aa).

NAD(+) is bound by residues 54–55, Gln132, 178–180, Glu198, Arg203, 244–245, 269–273, 279–280, and Tyr328; these read GG, GMG, NA, QTSAH, and YL. Cys416 is a catalytic residue. Gly498 provides a ligand contact to NAD(+).

The protein belongs to the urocanase family. Homodimer. The cofactor is NAD(+).

The catalysed reaction is 4-imidazolone-5-propanoate = trans-urocanate + H2O. It participates in amino-acid degradation; L-histidine degradation into L-glutamate; N-formimidoyl-L-glutamate from L-histidine: step 2/3. The sequence is that of Urocanate hydratase from Trifolium repens (Creeping white clover).